Reading from the N-terminus, the 460-residue chain is Phosphoglucomutase (460 aa).

The active-site Phosphoserine intermediate is the Ser103. Ser103 provides a ligand contact to Mg(2+). Substrate-binding positions include 103 to 104 (SH) and Lys113. Positions 239, 241, and 243 each coordinate Mg(2+). Substrate is bound by residues 243 to 244 (DR), Thr303, and 322 to 324 (EMS).

Belongs to the phosphohexose mutase family. Requires Mg(2+) as cofactor.

Its subcellular location is the cytoplasm. It catalyses the reaction alpha-D-glucose 1-phosphate = alpha-D-glucose 6-phosphate. This enzyme participates in both the breakdown and synthesis of glucose. This is Phosphoglucomutase (pgm) from Neisseria meningitidis serogroup A / serotype 4A (strain DSM 15465 / Z2491).